Here is a 305-residue protein sequence, read N- to C-terminus: tRNA uridine(34) hydroxylase (305 aa).

One can recognise a Rhodanese domain in the interval 136–230; that stretch reads ADENTVVVDK…YLEEVPREQS (95 aa). Cys190 acts as the Cysteine persulfide intermediate in catalysis.

This sequence belongs to the TrhO family.

It carries out the reaction uridine(34) in tRNA + AH2 + O2 = 5-hydroxyuridine(34) in tRNA + A + H2O. Its function is as follows. Catalyzes oxygen-dependent 5-hydroxyuridine (ho5U) modification at position 34 in tRNAs. The chain is tRNA uridine(34) hydroxylase from Brucella melitensis biotype 1 (strain ATCC 23456 / CCUG 17765 / NCTC 10094 / 16M).